We begin with the raw amino-acid sequence, 641 residues long: SUMO-activating enzyme subunit 2-B (641 aa).

ATP-binding positions include 24–29 (GAGGIG), Asp-48, 56–59 (NLNR), Lys-72, 95–96 (SI), and 117–122 (DNNAAR). Zn(2+) is bound by residues Cys-158 and Cys-161. Cys-173 (glycyl thioester intermediate) is an active-site residue. The Zn(2+) site is built by Cys-439 and Cys-442. Residues 546 to 641 (GDVPEKGPQK…EEDDDIIALD (96 aa)) are disordered. Over residues 548 to 561 (VPEKGPQKPPEESV) the composition is skewed to basic and acidic residues. A compositionally biased stretch (polar residues) spans 562-579 (KNITNGSDDGAQPSTSKA). 2 stretches are compositionally biased toward acidic residues: residues 582–594 (QDDV…DEES) and 630–641 (PVEEDDDIIALD).

The protein belongs to the ubiquitin-activating E1 family. Heterodimer of sae1 and uba2/sae2. The heterodimer corresponds to the two domains that are encoded on a single polypeptide chain in ubiquitin-activating enzyme E1. Interacts with ube2i.

Its subcellular location is the nucleus. Its pathway is protein modification; protein sumoylation. In terms of biological role, the heterodimer acts as an E1 ligase for sumo1, sumo2, and sumo3. It mediates ATP-dependent activation of sumo proteins followed by formation of a thioester bond between a sumo protein and a conserved active site cysteine residue on uba2/sae2. The protein is SUMO-activating enzyme subunit 2-B (uba2-b) of Xenopus laevis (African clawed frog).